The following is a 176-amino-acid chain: NAD(P)H-quinone oxidoreductase subunit 6, chloroplastic (176 aa).

5 helical membrane passes run 10 to 30 (FLLV…VLLT), 32 to 52 (PIYS…FYIL), 61 to 81 (AQLL…VMFM), 92 to 112 (LWTV…VSLM), and 152 to 172 (FFLP…GAIA).

Belongs to the complex I subunit 6 family. In terms of assembly, NDH is composed of at least 16 different subunits, 5 of which are encoded in the nucleus.

Its subcellular location is the plastid. The protein resides in the chloroplast thylakoid membrane. It catalyses the reaction a plastoquinone + NADH + (n+1) H(+)(in) = a plastoquinol + NAD(+) + n H(+)(out). The enzyme catalyses a plastoquinone + NADPH + (n+1) H(+)(in) = a plastoquinol + NADP(+) + n H(+)(out). Its function is as follows. NDH shuttles electrons from NAD(P)H:plastoquinone, via FMN and iron-sulfur (Fe-S) centers, to quinones in the photosynthetic chain and possibly in a chloroplast respiratory chain. The immediate electron acceptor for the enzyme in this species is believed to be plastoquinone. Couples the redox reaction to proton translocation, and thus conserves the redox energy in a proton gradient. The polypeptide is NAD(P)H-quinone oxidoreductase subunit 6, chloroplastic (ndhG) (Eucalyptus globulus subsp. globulus (Tasmanian blue gum)).